Reading from the N-terminus, the 243-residue chain is Geranylgeranylglyceryl phosphate synthase (243 aa).

Residues D29 and S58 each coordinate Mg(2+). Sn-glycerol 1-phosphate-binding positions include 178-184, 209-210, and 231-232; these read YLEAGSG, GG, and GT.

This sequence belongs to the GGGP/HepGP synthase family. Group II subfamily. In terms of assembly, homodimer. Mg(2+) is required as a cofactor.

It carries out the reaction sn-glycerol 1-phosphate + (2E,6E,10E)-geranylgeranyl diphosphate = sn-3-O-(geranylgeranyl)glycerol 1-phosphate + diphosphate. Functionally, prenyltransferase that catalyzes the transfer of the geranylgeranyl moiety of geranylgeranyl diphosphate (GGPP) to the C3 hydroxyl of sn-glycerol-1-phosphate (G1P). This is Geranylgeranylglyceryl phosphate synthase from Flavobacterium johnsoniae (strain ATCC 17061 / DSM 2064 / JCM 8514 / BCRC 14874 / CCUG 350202 / NBRC 14942 / NCIMB 11054 / UW101) (Cytophaga johnsonae).